We begin with the raw amino-acid sequence, 174 residues long: Repair DNA polymerase X (174 aa).

The interval 42-51 is involved in ssDNA binding; the sequence is REEKMLNDVD. Mg(2+)-binding residues include Asp49 and Asp51. An intrachain disulfide couples Cys81 to Cys86. Asp100 contacts Mg(2+).

The protein belongs to the DNA polymerase type-X family. Mg(2+) is required as a cofactor.

The protein resides in the virion. The catalysed reaction is DNA(n) + a 2'-deoxyribonucleoside 5'-triphosphate = DNA(n+1) + diphosphate. In terms of biological role, error-prone polymerase lacking a proofreading 3'-5' exonuclease which catalyzes the gap-filling reaction during the DNA repair process. Specifically binds intermediates in the single-nucleotide base-excision repair process. Also catalyzes DNA polymerization with low nucleotide-insertion fidelity. Probably acts as a strategic DNA mutase, which gives rise to a rapid emergence of variants. Generates mismatched G-G pairs, in that case, the polymerase first binds the deoxynucleotide followed by mismatch formation. Together with the viral DNA ligase, fills the single nucleotide gaps generated by the AP endonuclease. Binds DNA with high affinity via the helix alphaE. The protein is Repair DNA polymerase X of Ornithodoros (relapsing fever ticks).